Here is a 621-residue protein sequence, read N- to C-terminus: 1-deoxy-D-xylulose-5-phosphate synthase (621 aa).

Thiamine diphosphate contacts are provided by residues His80 and 121-123; that span reads GHS. Asp152 contacts Mg(2+). Residues 153–154, Asn181, Tyr288, and Glu370 contribute to the thiamine diphosphate site; that span reads GA. Asn181 provides a ligand contact to Mg(2+).

This sequence belongs to the transketolase family. DXPS subfamily. As to quaternary structure, homodimer. It depends on Mg(2+) as a cofactor. Requires thiamine diphosphate as cofactor.

The catalysed reaction is D-glyceraldehyde 3-phosphate + pyruvate + H(+) = 1-deoxy-D-xylulose 5-phosphate + CO2. It functions in the pathway metabolic intermediate biosynthesis; 1-deoxy-D-xylulose 5-phosphate biosynthesis; 1-deoxy-D-xylulose 5-phosphate from D-glyceraldehyde 3-phosphate and pyruvate: step 1/1. Functionally, catalyzes the acyloin condensation reaction between C atoms 2 and 3 of pyruvate and glyceraldehyde 3-phosphate to yield 1-deoxy-D-xylulose-5-phosphate (DXP). This Aeromonas hydrophila subsp. hydrophila (strain ATCC 7966 / DSM 30187 / BCRC 13018 / CCUG 14551 / JCM 1027 / KCTC 2358 / NCIMB 9240 / NCTC 8049) protein is 1-deoxy-D-xylulose-5-phosphate synthase.